The sequence spans 393 residues: Probable acetyl-CoA acetyltransferase (393 aa).

Cysteine 88 (acyl-thioester intermediate) is an active-site residue. Residues histidine 348 and cysteine 378 each act as proton acceptor in the active site.

This sequence belongs to the thiolase-like superfamily. Thiolase family.

The protein localises to the cytoplasm. The catalysed reaction is 2 acetyl-CoA = acetoacetyl-CoA + CoA. The protein is Probable acetyl-CoA acetyltransferase (yqeF) of Escherichia coli (strain K12).